Here is a 150-residue protein sequence, read N- to C-terminus: Large ribosomal subunit protein bL9 (150 aa).

It belongs to the bacterial ribosomal protein bL9 family.

In terms of biological role, binds to the 23S rRNA. In Corynebacterium diphtheriae (strain ATCC 700971 / NCTC 13129 / Biotype gravis), this protein is Large ribosomal subunit protein bL9.